The following is a 668-amino-acid chain: Threonine--tRNA ligase (668 aa).

The TGS domain occupies 1-61 (MSDLKIALTH…ADGDQVEPVA (61 aa)). Positions 265 to 564 (DHRKLGRDLD…LVEHYAGAFP (300 aa)) are catalytic. Positions 358, 409, and 541 each coordinate Zn(2+).

It belongs to the class-II aminoacyl-tRNA synthetase family. In terms of assembly, homodimer. Zn(2+) is required as a cofactor.

It is found in the cytoplasm. It catalyses the reaction tRNA(Thr) + L-threonine + ATP = L-threonyl-tRNA(Thr) + AMP + diphosphate + H(+). Its function is as follows. Catalyzes the attachment of threonine to tRNA(Thr) in a two-step reaction: L-threonine is first activated by ATP to form Thr-AMP and then transferred to the acceptor end of tRNA(Thr). Also edits incorrectly charged L-seryl-tRNA(Thr). The chain is Threonine--tRNA ligase from Nocardioides sp. (strain ATCC BAA-499 / JS614).